Consider the following 437-residue polypeptide: MSTIVSVWAREILDSRGNPTIEVEVSLESGHSGRAAVPSGASTGTREALELRDGDKGRYKGKGVEKAVDNVMGEIAEAVIGLDALRQVQLDNTLLDLDGTDNKERLGANAMLGVSLATARAASSFLGLPLYQYLGGVNAKVLPVPLMNIINGGAHAPNNLDIQEFMIMPIGAATFRDALRMGAETFHTLKALLAADGHVTSVGDEGGFAPNLKSHDEAFKYITRAIEESGYIPGAEIALAIDAAASEFYRDGKYHLAGEGKTFSNSEMTEWLGEFTAKYPLISIEDGLAEGDWEGWGELTYKLGDTVQLVGDDIFVTNPDILAQGIDEGVANSILIKLNQIGTLTETLDTIEMAKQAAYTTVISHRSGETEDHFIADLAVGLNAGQIKTGSLCRSDRLAKYNQLLRIEEDLDDAGIYFGPMIASHFGYEGDEEFEDA.

(2R)-2-phosphoglycerate is bound at residue Gln163. Glu205 (proton donor) is an active-site residue. Residues Asp242, Glu285, and Asp312 each coordinate Mg(2+). Residues Lys337, Arg366, Ser367, and Lys388 each coordinate (2R)-2-phosphoglycerate. Lys337 acts as the Proton acceptor in catalysis.

The protein belongs to the enolase family. It depends on Mg(2+) as a cofactor.

The protein localises to the cytoplasm. It is found in the secreted. It localises to the cell surface. The catalysed reaction is (2R)-2-phosphoglycerate = phosphoenolpyruvate + H2O. Its pathway is carbohydrate degradation; glycolysis; pyruvate from D-glyceraldehyde 3-phosphate: step 4/5. Its function is as follows. Catalyzes the reversible conversion of 2-phosphoglycerate (2-PG) into phosphoenolpyruvate (PEP). It is essential for the degradation of carbohydrates via glycolysis. The chain is Enolase from Nitratidesulfovibrio vulgaris (strain DP4) (Desulfovibrio vulgaris).